Consider the following 249-residue polypeptide: Isoprenyl transferase (249 aa).

Residue Asp-29 is part of the active site. Asp-29 lines the Mg(2+) pocket. Substrate-binding positions include 30-33 (GNGR), Trp-34, Arg-42, His-46, and 74-76 (STE). Asn-77 (proton acceptor) is an active-site residue. Residues Trp-78, Arg-80, Arg-197, and 203-205 (RLS) each bind substrate. Residue Glu-216 participates in Mg(2+) binding.

Belongs to the UPP synthase family. Homodimer. Requires Mg(2+) as cofactor.

Catalyzes the condensation of isopentenyl diphosphate (IPP) with allylic pyrophosphates generating different type of terpenoids. In Gloeobacter violaceus (strain ATCC 29082 / PCC 7421), this protein is Isoprenyl transferase.